We begin with the raw amino-acid sequence, 369 residues long: Anhydro-N-acetylmuramic acid kinase (369 aa).

ATP is bound at residue 12-19 (GTSLDGVD).

It belongs to the anhydro-N-acetylmuramic acid kinase family.

It catalyses the reaction 1,6-anhydro-N-acetyl-beta-muramate + ATP + H2O = N-acetyl-D-muramate 6-phosphate + ADP + H(+). It participates in amino-sugar metabolism; 1,6-anhydro-N-acetylmuramate degradation. Its pathway is cell wall biogenesis; peptidoglycan recycling. Functionally, catalyzes the specific phosphorylation of 1,6-anhydro-N-acetylmuramic acid (anhMurNAc) with the simultaneous cleavage of the 1,6-anhydro ring, generating MurNAc-6-P. Is required for the utilization of anhMurNAc either imported from the medium or derived from its own cell wall murein, and thus plays a role in cell wall recycling. This is Anhydro-N-acetylmuramic acid kinase from Actinobacillus pleuropneumoniae serotype 3 (strain JL03).